The sequence spans 79 residues: U-myrmeciitoxin(01)-Mg9a (79 aa).

The N-terminal stretch at 1 to 21 (MKLSCLLLTLAIIFVLTIVHA) is a signal peptide. A propeptide spanning residues 22–48 (PNVEAKALANPESDAIGFADAVGEADP) is cleaved from the precursor. Glutamine 78 bears the Glutamine amide mark.

As to expression, expressed by the venom gland.

The protein resides in the secreted. In terms of biological role, may have antimicrobial properties, like most ant linear peptides. The chain is U-myrmeciitoxin(01)-Mg9a from Myrmecia gulosa (Red bulldog ant).